The primary structure comprises 330 residues: Aspartate--ammonia ligase (330 aa).

The protein belongs to the class-II aminoacyl-tRNA synthetase family. AsnA subfamily.

It localises to the cytoplasm. It catalyses the reaction L-aspartate + NH4(+) + ATP = L-asparagine + AMP + diphosphate + H(+). The protein operates within amino-acid biosynthesis; L-asparagine biosynthesis; L-asparagine from L-aspartate (ammonia route): step 1/1. This chain is Aspartate--ammonia ligase, found in Photorhabdus laumondii subsp. laumondii (strain DSM 15139 / CIP 105565 / TT01) (Photorhabdus luminescens subsp. laumondii).